Reading from the N-terminus, the 554-residue chain is Undecaprenyl phosphate-alpha-4-amino-4-deoxy-L-arabinose arabinosyl transferase (554 aa).

Transmembrane regions (helical) follow at residues 4-24 (LKDS…LLPV), 87-107 (FGSI…ATLL), 115-135 (VLAT…TYAV), 178-198 (FMTK…PIVI), 206-226 (LVVF…PWAL), 262-282 (YLPI…GALF), 293-313 (ELFF…VAKG), 315-335 (LPTY…AYAT), 351-371 (VINL…GLGL), 384-404 (QKVW…FITL), and 414-434 (AAAC…QQVV).

The protein belongs to the glycosyltransferase 83 family.

The protein resides in the cell inner membrane. The catalysed reaction is 4-amino-4-deoxy-alpha-L-arabinopyranosyl di-trans,octa-cis-undecaprenyl phosphate + lipid IVA = lipid IIA + di-trans,octa-cis-undecaprenyl phosphate.. It functions in the pathway lipopolysaccharide metabolism; 4-amino-4-deoxy-beta-L-arabinose-lipid A biosynthesis. In terms of biological role, catalyzes the transfer of the L-Ara4N moiety of the glycolipid undecaprenyl phosphate-alpha-L-Ara4N to lipid A. The modified arabinose is attached to lipid A and is required for resistance to polymyxin and cationic antimicrobial peptides. The polypeptide is Undecaprenyl phosphate-alpha-4-amino-4-deoxy-L-arabinose arabinosyl transferase (Yersinia pseudotuberculosis serotype O:1b (strain IP 31758)).